The chain runs to 270 residues: tRNA pseudouridine synthase A (270 aa).

Aspartate 60 functions as the Nucleophile in the catalytic mechanism. A substrate-binding site is contributed by tyrosine 118.

This sequence belongs to the tRNA pseudouridine synthase TruA family. Homodimer.

The catalysed reaction is uridine(38/39/40) in tRNA = pseudouridine(38/39/40) in tRNA. Its function is as follows. Formation of pseudouridine at positions 38, 39 and 40 in the anticodon stem and loop of transfer RNAs. The chain is tRNA pseudouridine synthase A from Salmonella arizonae (strain ATCC BAA-731 / CDC346-86 / RSK2980).